Here is a 197-residue protein sequence, read N- to C-terminus: Nucleoside triphosphate pyrophosphatase (197 aa).

Catalysis depends on D72, which acts as the Proton acceptor.

Belongs to the Maf family. A divalent metal cation is required as a cofactor.

Its subcellular location is the cytoplasm. It catalyses the reaction a ribonucleoside 5'-triphosphate + H2O = a ribonucleoside 5'-phosphate + diphosphate + H(+). It carries out the reaction a 2'-deoxyribonucleoside 5'-triphosphate + H2O = a 2'-deoxyribonucleoside 5'-phosphate + diphosphate + H(+). Nucleoside triphosphate pyrophosphatase. May have a dual role in cell division arrest and in preventing the incorporation of modified nucleotides into cellular nucleic acids. The sequence is that of Nucleoside triphosphate pyrophosphatase from Corynebacterium glutamicum (strain R).